Consider the following 400-residue polypeptide: Enoyl-[acyl-carrier-protein] reductase [NADH] (400 aa).

NAD(+)-binding positions include Gly-48–Tyr-53, Phe-74–Glu-75, Asp-111–Ala-112, and Leu-139–Ala-140. Tyr-225 serves as a coordination point for substrate. The active-site Proton donor is the Tyr-235. NAD(+) contacts are provided by residues Lys-244 and Val-273–Thr-275.

This sequence belongs to the TER reductase family. In terms of assembly, monomer.

It carries out the reaction a 2,3-saturated acyl-[ACP] + NAD(+) = a (2E)-enoyl-[ACP] + NADH + H(+). Its pathway is lipid metabolism; fatty acid biosynthesis. Functionally, involved in the final reduction of the elongation cycle of fatty acid synthesis (FAS II). Catalyzes the reduction of a carbon-carbon double bond in an enoyl moiety that is covalently linked to an acyl carrier protein (ACP). This is Enoyl-[acyl-carrier-protein] reductase [NADH] from Burkholderia cenocepacia (strain ATCC BAA-245 / DSM 16553 / LMG 16656 / NCTC 13227 / J2315 / CF5610) (Burkholderia cepacia (strain J2315)).